Reading from the N-terminus, the 408-residue chain is Exodeoxyribonuclease 7 large subunit (408 aa).

It belongs to the XseA family. As to quaternary structure, heterooligomer composed of large and small subunits.

It localises to the cytoplasm. The catalysed reaction is Exonucleolytic cleavage in either 5'- to 3'- or 3'- to 5'-direction to yield nucleoside 5'-phosphates.. In terms of biological role, bidirectionally degrades single-stranded DNA into large acid-insoluble oligonucleotides, which are then degraded further into small acid-soluble oligonucleotides. This chain is Exodeoxyribonuclease 7 large subunit, found in Alkaliphilus oremlandii (strain OhILAs) (Clostridium oremlandii (strain OhILAs)).